The following is a 266-amino-acid chain: Hydroxyethylthiazole kinase (266 aa).

Residue Met44 coordinates substrate. ATP contacts are provided by Lys120 and Thr166. Gly193 lines the substrate pocket.

Belongs to the Thz kinase family. Mg(2+) serves as cofactor.

It catalyses the reaction 5-(2-hydroxyethyl)-4-methylthiazole + ATP = 4-methyl-5-(2-phosphooxyethyl)-thiazole + ADP + H(+). Its pathway is cofactor biosynthesis; thiamine diphosphate biosynthesis; 4-methyl-5-(2-phosphoethyl)-thiazole from 5-(2-hydroxyethyl)-4-methylthiazole: step 1/1. Its function is as follows. Catalyzes the phosphorylation of the hydroxyl group of 4-methyl-5-beta-hydroxyethylthiazole (THZ). This Syntrophomonas wolfei subsp. wolfei (strain DSM 2245B / Goettingen) protein is Hydroxyethylthiazole kinase.